Reading from the N-terminus, the 138-residue chain is Basic phospholipase A2 Mtx-b (138 aa).

A signal peptide spans 1–16 (MRALWIVAVLLVGVEG). 7 cysteine pairs are disulfide-bonded: C42–C131, C44–C60, C59–C111, C65–C138, C66–C104, C73–C97, and C91–C102. Positions 43, 45, and 47 each coordinate Ca(2+). Residue H63 is part of the active site. D64 is a Ca(2+) binding site. D105 is an active-site residue.

Heterodimer of an acidic subunit and a basic chain. The acidic subunit is non-toxic, without enzymatic activity and comprises 3 peptides that are cross-linked by 7 disulfide bridges. The basic subunit is toxic, has phospholipase A2 activity and is composed of a single chain. Ca(2+) serves as cofactor. As to expression, expressed by the venom gland.

It is found in the secreted. The catalysed reaction is a 1,2-diacyl-sn-glycero-3-phosphocholine + H2O = a 1-acyl-sn-glycero-3-phosphocholine + a fatty acid + H(+). In terms of biological role, snake venom phospholipase A2 (PLA2) that inhibits neuromuscular transmission by blocking acetylcholine release from the nerve termini. PLA2 catalyzes the calcium-dependent hydrolysis of the 2-acyl groups in 3-sn-phosphoglycerides. The protein is Basic phospholipase A2 Mtx-b of Crotalus scutulatus scutulatus (Mojave rattlesnake).